The sequence spans 172 residues: Zinc finger C2HC domain-containing protein 1B (172 aa).

2 consecutive C2HC/C3H-type zinc fingers follow at residues 14–43 (KLFP…VFNK) and 117–146 (DYIQ…QTSR). The Zn(2+) site is built by Cys18, Cys21, His33, Cys37, Cys121, Cys124, His136, and Cys140.

Belongs to the ZC2HC1 family. The cofactor is Zn(2+).

The sequence is that of Zinc finger C2HC domain-containing protein 1B (Zc2hc1b) from Mus musculus (Mouse).